The chain runs to 339 residues: tRNA N6-adenosine threonylcarbamoyltransferase (339 aa).

2 residues coordinate Fe cation: H114 and H118. Substrate contacts are provided by residues 137–141, D170, G183, D187, and N277; that span reads VVSGG. D305 provides a ligand contact to Fe cation.

The protein belongs to the KAE1 / TsaD family. Fe(2+) is required as a cofactor.

It localises to the cytoplasm. It catalyses the reaction L-threonylcarbamoyladenylate + adenosine(37) in tRNA = N(6)-L-threonylcarbamoyladenosine(37) in tRNA + AMP + H(+). Functionally, required for the formation of a threonylcarbamoyl group on adenosine at position 37 (t(6)A37) in tRNAs that read codons beginning with adenine. Is involved in the transfer of the threonylcarbamoyl moiety of threonylcarbamoyl-AMP (TC-AMP) to the N6 group of A37, together with TsaE and TsaB. TsaD likely plays a direct catalytic role in this reaction. This chain is tRNA N6-adenosine threonylcarbamoyltransferase, found in Clostridium beijerinckii (strain ATCC 51743 / NCIMB 8052) (Clostridium acetobutylicum).